Consider the following 193-residue polypeptide: 7-methyl-GTP pyrophosphatase (193 aa).

Aspartate 69 (proton acceptor) is an active-site residue.

It belongs to the Maf family. YceF subfamily. The cofactor is a divalent metal cation.

It is found in the cytoplasm. It catalyses the reaction N(7)-methyl-GTP + H2O = N(7)-methyl-GMP + diphosphate + H(+). In terms of biological role, nucleoside triphosphate pyrophosphatase that hydrolyzes 7-methyl-GTP (m(7)GTP). May have a dual role in cell division arrest and in preventing the incorporation of modified nucleotides into cellular nucleic acids. This chain is 7-methyl-GTP pyrophosphatase, found in Chromohalobacter salexigens (strain ATCC BAA-138 / DSM 3043 / CIP 106854 / NCIMB 13768 / 1H11).